Reading from the N-terminus, the 428-residue chain is Ammonium transporter AmtB (428 aa).

An N-terminal signal peptide occupies residues 1 to 22; the sequence is MKIATIKTGLASLAMLPGLVMA. At 23 to 32 the chain is on the periplasmic side; sequence APAVADKADN. A helical membrane pass occupies residues 33 to 54; that stretch reads AFMMICTALVLFMTIPGIALFY. Residues 55–65 are Cytoplasmic-facing; sequence GGLIRGKNVLS. Residues 66-90 traverse the membrane as a helical segment; it reads MLTQVTVTFALVCILWVVYGYSLAF. The Periplasmic segment spans residues 91–119; it reads GEGNNFFGNINWLMLKNIELTAVMGSIYQ. Residues 120-142 traverse the membrane as a helical segment; sequence YIHVAFQGSFACITVGLIVGALA. Residues 143-146 lie on the Cytoplasmic side of the membrane; sequence ERIR. A helical transmembrane segment spans residues 147-171; the sequence is FSAVLIFVVVWLTLSYIPIAHMVWG. Residues 172-185 lie on the Periplasmic side of the membrane; sequence GGLLASHGALDFAG. A helical transmembrane segment spans residues 186–201; sequence GTVVHINAAIAGLVGA. Over 202-221 the chain is Cytoplasmic; the sequence is YLIGKRVGFGKEAFKPHNLP. A helical transmembrane segment spans residues 222 to 241; the sequence is MVFTGTAILYIGWFGFNAGS. Position 241 (S241) interacts with NH4(+). Over 242 to 248 the chain is Periplasmic; the sequence is AGTANEI. Residues 249–273 form a helical membrane-spanning segment; it reads AALAFVNTVVATAAAILGWIFGEWA. The Cytoplasmic segment spans residues 274-279; sequence LRGKPS. The chain crosses the membrane as a helical span at residues 280–300; it reads LLGACSGAIAGLVGVTPACGY. Topologically, residues 301-302 are periplasmic; sequence IG. Residues 303–321 traverse the membrane as a helical segment; the sequence is VGGALIIGVVAGLAGLWGV. Residues 322–333 lie on the Cytoplasmic side of the membrane; it reads TMLKRLLRVDDP. The helical transmembrane segment at 334–355 threads the bilayer; that stretch reads CDVFGVHGVCGIVGCIMTGIFA. The Periplasmic segment spans residues 356-370; it reads ASSLGGVGFAEGVTM. Residues 371–399 form a helical membrane-spanning segment; that stretch reads GHQLLVQLESIAITIVWSGVVAFIGYKLA. Residues 400-428 are Cytoplasmic-facing; it reads DLTVGLRVPEEQEREGLDVNSHGENAYNA.

This sequence belongs to the ammonia transporter channel (TC 1.A.11.2) family. In terms of assembly, homotrimer. In response to elevation of the extracellular ammonium concentration, interacts and forms a complex with GlnK.

It is found in the cell inner membrane. With respect to regulation, in the presence of high extracellular ammonium concentrations, transport activity is inhibited by interaction with the regulatory protein GlnK. Formation of the GlnK-AmtB complex is influenced by intracellular pools of the effector molecules ATP, ADP, Mg(2+) and 2-oxoglutarate. The GlnK-AmtB interaction is also controlled by the level of intracellular glutamine and the uridylylation status of GlnK. In terms of biological role, involved in the uptake of ammonium/ammonia (NH(4)(+)/NH(3)). Transport is electrogenic. Following sequestration of NH(4)(+) at the periplasmic face, NH(4)(+) is deprotonated and neutral NH(3) is transported into the cytoplasm. Neutral NH(3) and charged H(+) are carried separately across the membrane on a unique two-lane pathway, before recombining to NH(4)(+) inside the cell. This is Ammonium transporter AmtB (amtB) from Escherichia coli O157:H7.